We begin with the raw amino-acid sequence, 413 residues long: Tyrosine--tRNA ligase (413 aa).

Tyr-34 provides a ligand contact to L-tyrosine. Positions 39–48 (PTSHSLTVGH) match the 'HIGH' region motif. Tyr-164 and Gln-168 together coordinate L-tyrosine. The 'KMSKS' region signature appears at 225 to 229 (KFGKS). An ATP-binding site is contributed by Lys-228. The region spanning 347–413 (ILLVDALVQT…GKKNNALIVF (67 aa)) is the S4 RNA-binding domain.

Belongs to the class-I aminoacyl-tRNA synthetase family. TyrS type 1 subfamily. In terms of assembly, homodimer.

It localises to the cytoplasm. The catalysed reaction is tRNA(Tyr) + L-tyrosine + ATP = L-tyrosyl-tRNA(Tyr) + AMP + diphosphate + H(+). Its function is as follows. Catalyzes the attachment of tyrosine to tRNA(Tyr) in a two-step reaction: tyrosine is first activated by ATP to form Tyr-AMP and then transferred to the acceptor end of tRNA(Tyr). In Aster yellows witches'-broom phytoplasma (strain AYWB), this protein is Tyrosine--tRNA ligase.